The chain runs to 340 residues: Ketol-acid reductoisomerase (NADP(+)) (340 aa).

Residues 1-183 (MAITVYYDKD…GGGRTGIIET (183 aa)) form the KARI N-terminal Rossmann domain. NADP(+) contacts are provided by residues 26–29 (FGSQ), arginine 49, serine 52, serine 54, and 84–87 (DEIQ). Histidine 109 is an active-site residue. Residue glycine 135 participates in NADP(+) binding. Residues 184 to 329 (TFKAETETDL…RNLRAMMPWI (146 aa)) enclose the KARI C-terminal knotted domain. 4 residues coordinate Mg(2+): aspartate 192, glutamate 196, glutamate 228, and glutamate 232. Serine 253 is a binding site for substrate.

The protein belongs to the ketol-acid reductoisomerase family. Mg(2+) is required as a cofactor.

It catalyses the reaction (2R)-2,3-dihydroxy-3-methylbutanoate + NADP(+) = (2S)-2-acetolactate + NADPH + H(+). It carries out the reaction (2R,3R)-2,3-dihydroxy-3-methylpentanoate + NADP(+) = (S)-2-ethyl-2-hydroxy-3-oxobutanoate + NADPH + H(+). It participates in amino-acid biosynthesis; L-isoleucine biosynthesis; L-isoleucine from 2-oxobutanoate: step 2/4. Its pathway is amino-acid biosynthesis; L-valine biosynthesis; L-valine from pyruvate: step 2/4. Involved in the biosynthesis of branched-chain amino acids (BCAA). Catalyzes an alkyl-migration followed by a ketol-acid reduction of (S)-2-acetolactate (S2AL) to yield (R)-2,3-dihydroxy-isovalerate. In the isomerase reaction, S2AL is rearranged via a Mg-dependent methyl migration to produce 3-hydroxy-3-methyl-2-ketobutyrate (HMKB). In the reductase reaction, this 2-ketoacid undergoes a metal-dependent reduction by NADPH to yield (R)-2,3-dihydroxy-isovalerate. This chain is Ketol-acid reductoisomerase (NADP(+)), found in Campylobacter jejuni subsp. jejuni serotype O:23/36 (strain 81-176).